A 179-amino-acid chain; its full sequence is Peptidyl-tRNA hydrolase (179 aa).

Residue tyrosine 15 participates in tRNA binding. Histidine 20 acts as the Proton acceptor in catalysis. 3 residues coordinate tRNA: tyrosine 66, asparagine 68, and asparagine 114.

Belongs to the PTH family. As to quaternary structure, monomer.

The protein resides in the cytoplasm. It catalyses the reaction an N-acyl-L-alpha-aminoacyl-tRNA + H2O = an N-acyl-L-amino acid + a tRNA + H(+). Its function is as follows. Hydrolyzes ribosome-free peptidyl-tRNAs (with 1 or more amino acids incorporated), which drop off the ribosome during protein synthesis, or as a result of ribosome stalling. Catalyzes the release of premature peptidyl moieties from peptidyl-tRNA molecules trapped in stalled 50S ribosomal subunits, and thus maintains levels of free tRNAs and 50S ribosomes. This is Peptidyl-tRNA hydrolase from Chlamydia trachomatis serovar L2b (strain UCH-1/proctitis).